The following is a 358-amino-acid chain: DNA integrity scanning protein DisA (358 aa).

The region spanning 6 to 144 (RPTLREAVAR…RGERHVLTDS (139 aa)) is the DAC domain. ATP is bound by residues G73, L91, and 104-108 (TRHRS).

The protein belongs to the DisA family. As to quaternary structure, homooctamer. Mg(2+) serves as cofactor.

The catalysed reaction is 2 ATP = 3',3'-c-di-AMP + 2 diphosphate. Participates in a DNA-damage check-point. DisA forms globular foci that rapidly scan along the chromosomes searching for lesions. Its function is as follows. Also has diadenylate cyclase activity, catalyzing the condensation of 2 ATP molecules into cyclic di-AMP (c-di-AMP). c-di-AMP likely acts as a signaling molecule that may couple DNA integrity with a cellular process. This is DNA integrity scanning protein DisA from Mycobacterium bovis (strain ATCC BAA-935 / AF2122/97).